The chain runs to 194 residues: Peptidyl-tRNA hydrolase (194 aa).

Residue Tyr-19 participates in tRNA binding. The active-site Proton acceptor is the His-24. TRNA is bound by residues Phe-69, Asn-71, and Asn-117.

This sequence belongs to the PTH family. Monomer.

It is found in the cytoplasm. It carries out the reaction an N-acyl-L-alpha-aminoacyl-tRNA + H2O = an N-acyl-L-amino acid + a tRNA + H(+). Hydrolyzes ribosome-free peptidyl-tRNAs (with 1 or more amino acids incorporated), which drop off the ribosome during protein synthesis, or as a result of ribosome stalling. Its function is as follows. Catalyzes the release of premature peptidyl moieties from peptidyl-tRNA molecules trapped in stalled 50S ribosomal subunits, and thus maintains levels of free tRNAs and 50S ribosomes. The sequence is that of Peptidyl-tRNA hydrolase from Neorickettsia sennetsu (strain ATCC VR-367 / Miyayama) (Ehrlichia sennetsu).